An 89-amino-acid polypeptide reads, in one-letter code: LSM complex subunit LSM3 (89 aa).

Positions 3–82 (TPLDLLKLNL…VTLISTPSED (80 aa)) constitute a Sm domain.

It belongs to the snRNP Sm proteins family. Component of the heptameric LSM1-LSM7 complex that forms a seven-membered ring structure with a donut shape. The LSm subunits are arranged in the order LSM1, LSM2, LSM3, LSM6, LSM5, LSM7 and LSM4. Except for LSM1, where a C-terminal helix crosses the ring structure to form additional interactions with LSM3 and LSM6, each subunit interacts only with its two neighboring subunits. The LSM1-LSM7 complex interacts with PAT1; within the complex PAT1 has direct interactions with LSM2 and LSM3. The LSM1-LSM7 complex interacts with XRN1. Component of the heptameric LSM2-LSM8 complex that forms a seven-membered ring structure with a donut shape; an RNA strand can pass through the hole in the center of the ring structure. The LSm subunits are arranged in the order LSM8, LSM2, LSM3, LSM6, LSM5, LSM7 and LSM4. Component of the spliceosome U4/U6-U5 tri-snRNP complex composed of the U4, U6 and U5 snRNAs and at least PRP3, PRP4, PRP6, PRP8, PRP18, PRP31, PRP38, SNU13, SNU23, SNU66, SNU114, SPP381, SMB1, SMD1, SMD2, SMD3, SMX2, SMX3, LSM2, LSM3, LSM4, LSM5, LSM6, LSM7, LSM8, BRR2 and DIB1. May be found in a complex comprising LSM2-LSM7 without LSM1 or LSM8; the complex associates with pre-P RNA and snoRNA SNR5.

Its subcellular location is the nucleus. The protein resides in the nucleolus. It is found in the cytoplasm. In terms of biological role, component of LSm protein complexes, which are involved in RNA processing and may function in a chaperone-like manner. Component of the cytoplasmic LSM1-LSM7 complex which is involved in mRNA degradation by activating the decapping step. Together with PAT1, the LSM1-LSM7 complex binds to osmotic stress-activated mRNAs to attenuate the osmotic stress response, probably by limiting ribosome access to the mRNA and consequently translation. Component of the nuclear LSM2-LSM8 complex, which is involved in spliceosome assembly. The LSM2-LSM8 complex plays a role in the biogenesis of the spliceosomal U4/U6-U5 tri-snRNP complex by accelerating PRP24-mediated annealing of U4/U6 di-snRNA. The LSM2-LSM8 complex binds U6 snRNA terminating with a non-cyclic 3' phosphate group. LSM2-LSM8 is probably also involved in degradation of nuclear pre-mRNA by targeting them for decapping. LSM2-LSM8 could be involved in processing of pre-tRNAs, pre-rRNAs and U3 snoRNA, although involvement may be indirect. In a complex that probably contains LSM2-LSM7, but not LSM1 or LSM8, associates with the precursor of the RNA component of RNase P (pre-P RNA) and may be involved in maturing pre-P RNA; the complex also associates with snoRNA SNR5. The protein is LSM complex subunit LSM3 (LSM3) of Saccharomyces cerevisiae (strain ATCC 204508 / S288c) (Baker's yeast).